The following is a 515-amino-acid chain: Gap junction alpha-9 protein (515 aa).

Topologically, residues 1–19 (MGDWNLLGDTLEEVHIHST) are cytoplasmic. A helical transmembrane segment spans residues 20–40 (MIGKIWLTILFIFRMLVLGVA). Over 41–77 (AEDVWNDEQSGFICNTEQPGCRNVCYDQAFPISLIRY) the chain is Extracellular. The chain crosses the membrane as a helical span at residues 78 to 98 (WVLQVIFVSSPSLVYMGHALY). Residues 99-166 (RLRVLEEERQ…YVIHIFTRSV (68 aa)) lie on the Cytoplasmic side of the membrane. A helical membrane pass occupies residues 167–187 (VEVGFMIGQYLLYGFHLEPLF). Residues 188-209 (KCHGHPCPNIIDCFVSRPTEKT) lie on the Extracellular side of the membrane. The chain crosses the membrane as a helical span at residues 210–230 (IFLLFMQSIATISLFLNILEI). The Cytoplasmic segment spans residues 231 to 515 (FHLGFKKIKR…GRRVPTDLQI (285 aa)). Residues 370–380 (KRETEGKDSKR) show a composition bias toward basic and acidic residues. Disordered stretches follow at residues 370-400 (KRETEGKDSKRNYYSRGHRSIPGVAIDGENN) and 428-472 (SSTE…NTAD). Residues 456 to 472 (PPSQGDSQSLDIPNTAD) show a composition bias toward polar residues.

It belongs to the connexin family. Alpha-type (group II) subfamily. In terms of assembly, a connexon is composed of a hexamer of connexins. Highly abundant in skeletal muscle. Also detected in testis.

It localises to the cell membrane. It is found in the cell junction. The protein localises to the gap junction. Functionally, one gap junction consists of a cluster of closely packed pairs of transmembrane channels, the connexons, through which materials of low MW diffuse from one cell to a neighboring cell. The protein is Gap junction alpha-9 protein (GJA9) of Homo sapiens (Human).